The following is an 87-amino-acid chain: Small ribosomal subunit protein uS17 (87 aa).

This sequence belongs to the universal ribosomal protein uS17 family. As to quaternary structure, part of the 30S ribosomal subunit.

One of the primary rRNA binding proteins, it binds specifically to the 5'-end of 16S ribosomal RNA. The polypeptide is Small ribosomal subunit protein uS17 (Bacillus mycoides (strain KBAB4) (Bacillus weihenstephanensis)).